We begin with the raw amino-acid sequence, 160 residues long: UPF0262 protein Mrad2831_3513 (160 aa).

This sequence belongs to the UPF0262 family.

The protein is UPF0262 protein Mrad2831_3513 of Methylobacterium radiotolerans (strain ATCC 27329 / DSM 1819 / JCM 2831 / NBRC 15690 / NCIMB 10815 / 0-1).